Here is a 149-residue protein sequence, read N- to C-terminus: MKCPFCGNRDTNVRDSRSVNEGTFIKRRRFCGECGAKFTTFETIQLKEIKVIKKNGSCESFDREKAMRSVEVALRKRPVTRERVDELMNSVIYKIERIHDAKITAKVIGELIMEELATLDKVAFIRFASVYMNFENEKDFVQLIGSLTS.

The segment at 3 to 34 (CPFCGNRDTNVRDSRSVNEGTFIKRRRFCGEC) is a zinc-finger region. In terms of domain architecture, ATP-cone spans 49–139 (IKVIKKNGSC…VYMNFENEKD (91 aa)).

Belongs to the NrdR family. Requires Zn(2+) as cofactor.

Its function is as follows. Negatively regulates transcription of bacterial ribonucleotide reductase nrd genes and operons by binding to NrdR-boxes. The sequence is that of Transcriptional repressor NrdR from Neorickettsia sennetsu (strain ATCC VR-367 / Miyayama) (Ehrlichia sennetsu).